Reading from the N-terminus, the 224-residue chain is UPF0758 protein ABO_0214 (224 aa).

One can recognise an MPN domain in the interval 102 to 224 (PLDNPDKAGQ…WVSLASRGAV (123 aa)). Residues His-173, His-175, and Asp-186 each coordinate Zn(2+). Residues 173–186 (HNHPSGVAEPSQSD) carry the JAMM motif motif.

The protein belongs to the UPF0758 family.

The polypeptide is UPF0758 protein ABO_0214 (Alcanivorax borkumensis (strain ATCC 700651 / DSM 11573 / NCIMB 13689 / SK2)).